A 105-amino-acid polypeptide reads, in one-letter code: Phosphoribosyl-ATP pyrophosphatase (105 aa).

Belongs to the PRA-PH family.

Its subcellular location is the cytoplasm. The catalysed reaction is 1-(5-phospho-beta-D-ribosyl)-ATP + H2O = 1-(5-phospho-beta-D-ribosyl)-5'-AMP + diphosphate + H(+). It participates in amino-acid biosynthesis; L-histidine biosynthesis; L-histidine from 5-phospho-alpha-D-ribose 1-diphosphate: step 2/9. The chain is Phosphoribosyl-ATP pyrophosphatase from Methylococcus capsulatus (strain ATCC 33009 / NCIMB 11132 / Bath).